The chain runs to 425 residues: Glutamyl-tRNA reductase (425 aa).

Residues 49-52, Ser-107, 112-114, and Gln-118 each bind substrate; these read TCNR and EPQ. Cys-50 acts as the Nucleophile in catalysis. Residue 187–192 participates in NADP(+) binding; sequence GAGETI.

This sequence belongs to the glutamyl-tRNA reductase family. Homodimer.

It carries out the reaction (S)-4-amino-5-oxopentanoate + tRNA(Glu) + NADP(+) = L-glutamyl-tRNA(Glu) + NADPH + H(+). The protein operates within porphyrin-containing compound metabolism; protoporphyrin-IX biosynthesis; 5-aminolevulinate from L-glutamyl-tRNA(Glu): step 1/2. Catalyzes the NADPH-dependent reduction of glutamyl-tRNA(Glu) to glutamate 1-semialdehyde (GSA). The chain is Glutamyl-tRNA reductase from Pseudomonas entomophila (strain L48).